The following is a 387-amino-acid chain: MTPTELNLKAKALLETHFDDIVLSGEISKITLHGSGHWYFDLKDERSSIACAMFKGANLKVGFKPAVGNFLELCGSVSLYPESGRYQFIATSMKKAGFGDLEAQFLALKERLQKEGLFDPRFKKSLPKFPKKVGIITSKTSAALQDMLKLIHQKEYFLAKIYIFDALTQGNNAPFSLIQALKKADDMDLDVLIIARGGGSREDLFCFNDENLAREIFKAKTPIISAIGHEIDYVISDFVADFRAPTPSAAIDTLFYSKLDIEQSLDLMEEKLMQLWNYKIQNYENLLLNLSKFFKFNSLPKIIDEKIKQSHNIEKQLNHLLANQMRYNELKLDKLQNAYLQHENFFNKSKKFICIRKNGKIANLEDLKSDDIVILSSQTSQKEAKIL.

This sequence belongs to the XseA family. As to quaternary structure, heterooligomer composed of large and small subunits.

Its subcellular location is the cytoplasm. The catalysed reaction is Exonucleolytic cleavage in either 5'- to 3'- or 3'- to 5'-direction to yield nucleoside 5'-phosphates.. In terms of biological role, bidirectionally degrades single-stranded DNA into large acid-insoluble oligonucleotides, which are then degraded further into small acid-soluble oligonucleotides. In Campylobacter jejuni subsp. jejuni serotype O:23/36 (strain 81-176), this protein is Exodeoxyribonuclease 7 large subunit.